The primary structure comprises 51 residues: Perinerin (51 aa).

Its function is as follows. Antibacterial activity against both Gram-negative and Gram-positive bacteria. Shows marked activity against P.aeruginosa, B.megaterium, A.viridans, moderate activity against E.coli K-12, S.aureus and M.luteus, and minor activity against P.vulgaris. Antifungal activity against P.heliothis. The polypeptide is Perinerin (Perinereis aibuhitensis (Korean lugworm)).